Consider the following 115-residue polypeptide: Guanylin (115 aa).

The N-terminal stretch at 1 to 21 (MNAFLLSALCLLGAWAALAGG) is a signal peptide. Intrachain disulfides connect Cys-69–Cys-82, Cys-104–Cys-112, and Cys-107–Cys-115.

This sequence belongs to the guanylin family. Highly expressed in ileum and colon. Found in plasma.

It localises to the secreted. Functionally, endogenous activator of intestinal guanylate cyclase. It stimulates this enzyme through the same receptor binding region as the heat-stable enterotoxins. This chain is Guanylin (GUCA2A), found in Homo sapiens (Human).